The sequence spans 67 residues: Protein SlyX homolog (67 aa).

Residues 48–60 (TSAPSTAAESNPQ) show a composition bias toward polar residues. Residues 48–67 (TSAPSTAAESNPQHEIPPHY) form a disordered region.

It belongs to the SlyX family.

The chain is Protein SlyX homolog from Cupriavidus pinatubonensis (strain JMP 134 / LMG 1197) (Cupriavidus necator (strain JMP 134)).